The sequence spans 350 residues: 4-hydroxy-3-methylbut-2-enyl diphosphate reductase (350 aa).

Residue C36 coordinates [4Fe-4S] cluster. Residues H65 and H101 each coordinate (2E)-4-hydroxy-3-methylbut-2-enyl diphosphate. Residues H65 and H101 each contribute to the dimethylallyl diphosphate site. Isopentenyl diphosphate is bound by residues H65 and H101. C123 lines the [4Fe-4S] cluster pocket. (2E)-4-hydroxy-3-methylbut-2-enyl diphosphate is bound at residue H151. H151 contacts dimethylallyl diphosphate. Residue H151 participates in isopentenyl diphosphate binding. E153 functions as the Proton donor in the catalytic mechanism. T192 provides a ligand contact to (2E)-4-hydroxy-3-methylbut-2-enyl diphosphate. C222 lines the [4Fe-4S] cluster pocket. (2E)-4-hydroxy-3-methylbut-2-enyl diphosphate contacts are provided by S250, S251, N252, and S295. Dimethylallyl diphosphate contacts are provided by S250, S251, N252, and S295. Residues S250, S251, N252, and S295 each coordinate isopentenyl diphosphate.

It belongs to the IspH family. Requires [4Fe-4S] cluster as cofactor.

It carries out the reaction isopentenyl diphosphate + 2 oxidized [2Fe-2S]-[ferredoxin] + H2O = (2E)-4-hydroxy-3-methylbut-2-enyl diphosphate + 2 reduced [2Fe-2S]-[ferredoxin] + 2 H(+). The enzyme catalyses dimethylallyl diphosphate + 2 oxidized [2Fe-2S]-[ferredoxin] + H2O = (2E)-4-hydroxy-3-methylbut-2-enyl diphosphate + 2 reduced [2Fe-2S]-[ferredoxin] + 2 H(+). Its pathway is isoprenoid biosynthesis; dimethylallyl diphosphate biosynthesis; dimethylallyl diphosphate from (2E)-4-hydroxy-3-methylbutenyl diphosphate: step 1/1. The protein operates within isoprenoid biosynthesis; isopentenyl diphosphate biosynthesis via DXP pathway; isopentenyl diphosphate from 1-deoxy-D-xylulose 5-phosphate: step 6/6. In terms of biological role, catalyzes the conversion of 1-hydroxy-2-methyl-2-(E)-butenyl 4-diphosphate (HMBPP) into a mixture of isopentenyl diphosphate (IPP) and dimethylallyl diphosphate (DMAPP). Acts in the terminal step of the DOXP/MEP pathway for isoprenoid precursor biosynthesis. The chain is 4-hydroxy-3-methylbut-2-enyl diphosphate reductase from Rhizobium meliloti (strain 1021) (Ensifer meliloti).